Reading from the N-terminus, the 150-residue chain is UPF0178 protein PC1_0756 (150 aa).

Belongs to the UPF0178 family.

The sequence is that of UPF0178 protein PC1_0756 from Pectobacterium carotovorum subsp. carotovorum (strain PC1).